The following is a 396-amino-acid chain: Elongation factor Tu (396 aa).

Residues 10-206 (KPHCNIGTIG…NVDEYIPQPE (197 aa)) enclose the tr-type G domain. The G1 stretch occupies residues 19–26 (GHVDHGKT). Residue 19 to 26 (GHVDHGKT) coordinates GTP. Mg(2+) is bound at residue Thr-26. Positions 60 to 64 (GITIS) are G2. The G3 stretch occupies residues 81 to 84 (DCPG). Residues 81-85 (DCPGH) and 136-139 (NKCD) each bind GTP. The interval 136-139 (NKCD) is G4. The G5 stretch occupies residues 174-176 (SAL).

Belongs to the TRAFAC class translation factor GTPase superfamily. Classic translation factor GTPase family. EF-Tu/EF-1A subfamily. Monomer.

Its subcellular location is the cytoplasm. The catalysed reaction is GTP + H2O = GDP + phosphate + H(+). GTP hydrolase that promotes the GTP-dependent binding of aminoacyl-tRNA to the A-site of ribosomes during protein biosynthesis. The protein is Elongation factor Tu of Afipia carboxidovorans (strain ATCC 49405 / DSM 1227 / KCTC 32145 / OM5) (Oligotropha carboxidovorans).